The following is a 200-amino-acid chain: Recombination protein RecR (200 aa).

The segment at Cys58–Cys75 adopts a C4-type zinc-finger fold. The Toprim domain occupies Ser82–Pro177.

It belongs to the RecR family.

In terms of biological role, may play a role in DNA repair. It seems to be involved in an RecBC-independent recombinational process of DNA repair. It may act with RecF and RecO. The polypeptide is Recombination protein RecR (Chlamydia caviae (strain ATCC VR-813 / DSM 19441 / 03DC25 / GPIC) (Chlamydophila caviae)).